Here is a 589-residue protein sequence, read N- to C-terminus: BTB/POZ domain and ankyrin repeat-containing protein NPR3 (589 aa).

The segment at 1–25 (METSTISFSSSSPPSPPPPQPAPGD) is disordered. Positions 13 to 22 (PPSPPPPQPA) are enriched in pro residues. The 86-residue stretch at 52–137 (AEIVLASGGG…LYTGRLRSAP (86 aa)) folds into the BTB domain. The C2HC NPR-type zinc finger occupies 140-154 (AAACLDDGCSHDACR). Residues cysteine 143, cysteine 148, histidine 150, and cysteine 153 each contribute to the Zn(2+) site. ANK repeat units lie at residues 260–290 (KRVRNIHKALDSDDVDLVGMLLKESPVTLDD), 292–319 (FAIHYAAAYCEPKVLAELLKLESANVNL), and 323–352 (SGYTPLHMACMRREPDIIVSLIEKGASVLE). The tract at residues 382–521 (ERSKAYLCIG…LDKFLNEEST (140 aa)) is salicylic acid-binding core (SBC). Arginine 433 contributes to the salicylate binding site. The tract at residues 555–589 (DKAAGAAISSSTSASSSPRYETKLRPGNKKGKLSR) is disordered. A compositionally biased stretch (low complexity) spans 558 to 571 (AGAAISSSTSASSS). Basic residues predominate over residues 580-589 (PGNKKGKLSR).

This sequence belongs to the plant 'ANKYRIN-BTB/POZ' family. 'NPR1-like' subfamily. In terms of assembly, interacts with TGA2.1, TGA2.2, TGA2.3, LG2, TGAL1, TGAL4, NRR, RH1, RH2 and RH3.

Its subcellular location is the nucleus. The protein operates within protein modification; protein ubiquitination. Salicylic acid (SA)-binding substrate-specific adapter of an E3 ubiquitin-protein ligase complex (CUL3-RBX1-BTB) which mediates the ubiquitination and subsequent proteasomal degradation of target proteins. Involved in defense response against the bacterial blight disease caused by Xanthomonas oryzae pv. oryzae (Xoo). Plants expressing an NPR3/NH3 transgene driven by its native promoter show enhanced resistance to the Xoo pathogen, and exhibit elevated sensitivity to benzothiadiazole (BTH) treatment and enhanced induction of defense-related genes upon treatment with BTH. Intriguingly, constitutive over-expression of NPR3/NH3 with a ubiquitin promoter does not confer disease resistance to Xoo. The sequence is that of BTB/POZ domain and ankyrin repeat-containing protein NPR3 from Oryza sativa subsp. japonica (Rice).